Reading from the N-terminus, the 84-residue chain is uncharacterized protein (84 aa).

It belongs to the chlamydial CPn_0711/CT_665/TC_0036 family.

This is an uncharacterized protein from Chlamydia muridarum (strain MoPn / Nigg).